The following is a 287-amino-acid chain: mRNA-capping enzyme regulatory subunit OPG124 (287 aa).

The protein belongs to the orthopoxvirus mRNA-capping enzyme regulatory subunit family. As to quaternary structure, interacts with the late transcription elongation factor VLTF-4/OPG110. Interacts with the late transcription factors VLTF-1.

It is found in the virion. In terms of biological role, acts with RNA polymerase to initiate transcription from late gene promoters. This is mRNA-capping enzyme regulatory subunit OPG124 (OPG124) from Monkeypox virus.